A 482-amino-acid chain; its full sequence is Chromosomal replication initiator protein DnaA (482 aa).

A domain I, interacts with DnaA modulators region spans residues 1-71 (MKQSILFERV…TGLFQAEDPE (71 aa)). Positions 71-139 (EILKIEVLVR…ASFGSPLFGS (69 aa)) are domain II. The tract at residues 140-362 (PLDSRFTFDT…GAFNQLVFRR (223 aa)) is domain III, AAA+ region. Positions 186, 188, 189, and 190 each coordinate ATP. The domain IV, binds dsDNA stretch occupies residues 363–482 (SFEPNLSIER…VELLKRLINE (120 aa)).

Belongs to the DnaA family. In terms of assembly, oligomerizes as a right-handed, spiral filament on DNA at oriC.

It localises to the cytoplasm. Plays an essential role in the initiation and regulation of chromosomal replication. ATP-DnaA binds to the origin of replication (oriC) to initiate formation of the DNA replication initiation complex once per cell cycle. Binds the DnaA box (a 9 base pair repeat at the origin) and separates the double-stranded (ds)DNA. Forms a right-handed helical filament on oriC DNA; dsDNA binds to the exterior of the filament while single-stranded (ss)DNA is stabiized in the filament's interior. The ATP-DnaA-oriC complex binds and stabilizes one strand of the AT-rich DNA unwinding element (DUE), permitting loading of DNA polymerase. After initiation quickly degrades to an ADP-DnaA complex that is not apt for DNA replication. Binds acidic phospholipids. The sequence is that of Chromosomal replication initiator protein DnaA from Rhizobium johnstonii (strain DSM 114642 / LMG 32736 / 3841) (Rhizobium leguminosarum bv. viciae).